The sequence spans 237 residues: Photosystem I-associated linker protein CpcL (237 aa).

The region spanning T11–R191 is the PBS-linker domain. The helical transmembrane segment at G208–L228 threads the bilayer.

This sequence belongs to the phycobilisome linker protein family. As to quaternary structure, part of a specialized phycobilisome (PBS), a structure that is usually composed of two distinct substructures: a core complex and a number of rods radiating from the core. This protein is part of a core-less PBS rod (called CpcL-PBS). In vegetative cells associated substoichiometrically with photosystem I and phycobiliproteins phycocyanin as well as phycoerythrocyanin in the thylakoid membrane, not found in conventional, hemidiscoidal phycobilisomes.

It localises to the cellular thylakoid membrane. Rod linker protein, associated with phycocyanin (PC). Linker polypeptides determine the state of aggregation and the location of the disk-shaped phycobiliprotein units within the phycobilisome (PBS) and modulate their spectroscopic properties in order to mediate a directed and optimal energy transfer. Forms a supercomplex with tetrameric photosystem I (PSI) and PC that allows efficient energy transfer from PC to PSI. This protein seems to be in the middle of the PC hexameric rod and may anchor the PC rods at the periphery of PSI tetramers. May be involved in the cyclic electron transport around PSI that provides ATP needed for N(2) fixation in heterocysts. In Nostoc sp. (strain PCC 7120 / SAG 25.82 / UTEX 2576), this protein is Photosystem I-associated linker protein CpcL.